An 89-amino-acid chain; its full sequence is Serine-rich and transmembrane domain-containing 2 (89 aa).

N-linked (GlcNAc...) asparagine glycosylation occurs at Asn11. A helical transmembrane segment spans residues 38–58 (YVGLFLSLLAILLILLFTMLL).

The protein localises to the membrane. The polypeptide is Serine-rich and transmembrane domain-containing 2 (Mus musculus (Mouse)).